We begin with the raw amino-acid sequence, 397 residues long: Probable sugar efflux transporter (397 aa).

Helical transmembrane passes span 15–35 (VVTL…PVGL), 51–71 (GIML…FMLL), 81–101 (LICL…AWSF), 103–123 (VLVI…SITA), 136–156 (AQAL…GLPV), 170–190 (FLAI…LLPL), 209–229 (PALM…YTAY), 246–266 (FATV…VIFG), 273–293 (ASVL…LLMP), 301–321 (LAIL…GMQV), 333–353 (VAMS…ALVG), and 364–384 (DIGY…VIIF).

Belongs to the major facilitator superfamily. SotB (TC 2.A.1.2) family.

The protein localises to the cell inner membrane. In terms of biological role, involved in the efflux of sugars. The physiological role may be the reduction of the intracellular concentration of toxic sugars or sugar metabolites. The polypeptide is Probable sugar efflux transporter (Escherichia fergusonii (strain ATCC 35469 / DSM 13698 / CCUG 18766 / IAM 14443 / JCM 21226 / LMG 7866 / NBRC 102419 / NCTC 12128 / CDC 0568-73)).